The sequence spans 278 residues: S-methyl-5'-thioadenosine phosphorylase (278 aa).

Residues serine 13, 55–56 (RH), and 88–89 (TA) contribute to the phosphate site. Substrate is bound at residue methionine 190. Phosphate is bound at residue threonine 191. 214-216 (DYD) is a substrate binding site.

The protein belongs to the PNP/MTAP phosphorylase family. MTAP subfamily. In terms of assembly, homotrimer.

The protein localises to the cytoplasm. Its subcellular location is the nucleus. It catalyses the reaction S-methyl-5'-thioadenosine + phosphate = 5-(methylsulfanyl)-alpha-D-ribose 1-phosphate + adenine. It participates in amino-acid biosynthesis; L-methionine biosynthesis via salvage pathway; S-methyl-5-thio-alpha-D-ribose 1-phosphate from S-methyl-5'-thioadenosine (phosphorylase route): step 1/1. Functionally, catalyzes the reversible phosphorylation of S-methyl-5'-thioadenosine (MTA) to adenine and 5-methylthioribose-1-phosphate. Involved in the breakdown of MTA, a major by-product of polyamine biosynthesis. Responsible for the first step in the methionine salvage pathway after MTA has been generated from S-adenosylmethionine. Has broad substrate specificity with 6-aminopurine nucleosides as preferred substrates. The sequence is that of S-methyl-5'-thioadenosine phosphorylase from Anopheles gambiae (African malaria mosquito).